The primary structure comprises 92 residues: Small ribosomal subunit protein uS19c (92 aa).

It belongs to the universal ribosomal protein uS19 family.

It localises to the plastid. Protein S19 forms a complex with S13 that binds strongly to the 16S ribosomal RNA. The chain is Small ribosomal subunit protein uS19c from Cuscuta exaltata (Tall dodder).